Reading from the N-terminus, the 146-residue chain is 3-hydroxyacyl-[acyl-carrier-protein] dehydratase FabZ (146 aa).

H48 is an active-site residue.

It belongs to the thioester dehydratase family. FabZ subfamily.

It is found in the cytoplasm. It carries out the reaction a (3R)-hydroxyacyl-[ACP] = a (2E)-enoyl-[ACP] + H2O. In terms of biological role, involved in unsaturated fatty acids biosynthesis. Catalyzes the dehydration of short chain beta-hydroxyacyl-ACPs and long chain saturated and unsaturated beta-hydroxyacyl-ACPs. The sequence is that of 3-hydroxyacyl-[acyl-carrier-protein] dehydratase FabZ from Campylobacter lari (strain RM2100 / D67 / ATCC BAA-1060).